Consider the following 225-residue polypeptide: Ribosome maturation factor RimM (225 aa).

The PRC barrel domain maps to 144–225; it reads ADEFYWVDLI…RIVVDWEADY (82 aa).

Belongs to the RimM family. In terms of assembly, binds ribosomal protein uS19.

The protein resides in the cytoplasm. In terms of biological role, an accessory protein needed during the final step in the assembly of 30S ribosomal subunit, possibly for assembly of the head region. Essential for efficient processing of 16S rRNA. May be needed both before and after RbfA during the maturation of 16S rRNA. It has affinity for free ribosomal 30S subunits but not for 70S ribosomes. This chain is Ribosome maturation factor RimM, found in Burkholderia vietnamiensis (strain G4 / LMG 22486) (Burkholderia cepacia (strain R1808)).